Here is a 114-residue protein sequence, read N- to C-terminus: MSDDVALPLQFTEAAAKKVKVLIADENNPELKLRVYITGGGCSGFQYGFTFDDQINDGDMTIEKQGVALVVDPMSLQYLVGGAVDYTEGLEGSRFVVTNPNAKSTCGCGSSFSI.

Iron-sulfur cluster is bound by residues cysteine 42, cysteine 106, and cysteine 108.

This sequence belongs to the HesB/IscA family. In terms of assembly, homodimer. Iron-sulfur cluster serves as cofactor.

In terms of biological role, required for insertion of 4Fe-4S clusters for at least IspG. This Enterobacter sp. (strain 638) protein is Iron-sulfur cluster insertion protein ErpA.